The sequence spans 61 residues: UPF0434 protein MS0934 (61 aa).

It belongs to the UPF0434 family.

The chain is UPF0434 protein MS0934 from Mannheimia succiniciproducens (strain KCTC 0769BP / MBEL55E).